A 699-amino-acid polypeptide reads, in one-letter code: Receptor-type tyrosine-protein phosphatase epsilon (699 aa).

Residues 1 to 22 (MEPFCPLLLASFSLSLATAGQG) form the signal peptide. Positions 20–36 (GQGNDTTPTESNWTSTT) are enriched in low complexity. The interval 20-41 (GQGNDTTPTESNWTSTTAGPPD) is disordered. N-linked (GlcNAc...) asparagine glycans are attached at residues Asn23 and Asn31. Residues 23-47 (NDTTPTESNWTSTTAGPPDPGTSQP) lie on the Extracellular side of the membrane. Residues 48-68 (LLTWLLLPLLLLLFLLAAYFF) traverse the membrane as a helical segment. Over 69-699 (RFRKQRKAVV…DIFSDYANFK (631 aa)) the chain is Cytoplasmic. Tyrosine-protein phosphatase domains are found at residues 134–393 (FREE…LLEY) and 425–688 (LEEE…VQDF). Substrate-binding positions include Asp302, 334–340 (CSAGVGR), and Gln378. The Phosphocysteine intermediate role is filled by Cys334. Cys629 (phosphocysteine intermediate) is an active-site residue. Tyr695 carries the phosphotyrosine modification.

Belongs to the protein-tyrosine phosphatase family. Receptor class 4 subfamily. Monomer. Isoform 2: Homodimer. Can form oligomers. Dimerization is increased by oxidative stress and decreased by EGFR. Isoform 2 interacts with GRB2. A catalytically active cytoplasmic form (p65) is produced by proteolytic cleavage of either isoform 1, isoform 2 or isoform 3. Post-translationally, isoform 1 and isoform 2 are phosphorylated on tyrosine residues by tyrosine kinase Neu. In terms of processing, N-glycosylated. In terms of tissue distribution, isoform 1 is highly expressed in the brain, lung, spleen and testis. Isoform 2 is highly expressed in thymus, spleen and lung. Isoform 1 and isoform 2 are expressed in primary hepatocytes.

It is found in the cell membrane. It localises to the cytoplasm. It carries out the reaction O-phospho-L-tyrosyl-[protein] + H2O = L-tyrosyl-[protein] + phosphate. Its function is as follows. Isoform 1 plays a critical role in signaling transduction pathways and phosphoprotein network topology in red blood cells. May play a role in osteoclast formation and function. Acts as a negative regulator of insulin receptor (IR) signaling and is involved in insulin-induced glucose metabolism mainly through direct dephosphorylation and inactivation of IR in hepatocytes and liver. In terms of biological role, isoform 2 acts as a negative regulator of insulin receptor (IR) signaling in skeletal muscle. Regulates insulin-induced tyrosine phosphorylation of insulin receptor (IR) and insulin receptor substrate 1 (IRS-1), phosphorylation of protein kinase B and glycogen synthase kinase-3 and insulin induced stimulation of glucose uptake. Functionally, isoform 1 and isoform 2 act as a negative regulator of FceRI-mediated signal transduction leading to cytokine production and degranulation, most likely by acting at the level of SYK to affect downstream events such as phosphorylation of SLP76 and LAT and mobilization of Ca(2+). This Rattus norvegicus (Rat) protein is Receptor-type tyrosine-protein phosphatase epsilon (Ptpre).